We begin with the raw amino-acid sequence, 21 residues long: Hemocyanin subunit 4 (21 aa).

The protein belongs to the tyrosinase family. Hemocyanin subfamily. In terms of tissue distribution, hemolymph.

Its subcellular location is the secreted. It localises to the extracellular space. In terms of biological role, hemocyanins are copper-containing oxygen carriers occurring freely dissolved in the hemolymph of many mollusks and arthropods. This Maja squinado (Mediterranean spider crab) protein is Hemocyanin subunit 4.